A 335-amino-acid polypeptide reads, in one-letter code: Glyceraldehyde-3-phosphate dehydrogenase (335 aa).

NAD(+)-binding positions include 12 to 13 (RI), Asp34, and Lys79. D-glyceraldehyde 3-phosphate is bound by residues 150–152 (SCT), Thr181, 210–211 (TG), and Arg233. The Nucleophile role is filled by Cys151. Asn315 is an NAD(+) binding site.

It belongs to the glyceraldehyde-3-phosphate dehydrogenase family. As to quaternary structure, homotetramer.

It localises to the cytoplasm. It catalyses the reaction D-glyceraldehyde 3-phosphate + phosphate + NAD(+) = (2R)-3-phospho-glyceroyl phosphate + NADH + H(+). It functions in the pathway carbohydrate degradation; glycolysis; pyruvate from D-glyceraldehyde 3-phosphate: step 1/5. The protein is Glyceraldehyde-3-phosphate dehydrogenase (GPD) of Debaryomyces hansenii (strain ATCC 36239 / CBS 767 / BCRC 21394 / JCM 1990 / NBRC 0083 / IGC 2968) (Yeast).